The primary structure comprises 86 residues: Large ribosomal subunit protein bL31B (86 aa).

Belongs to the bacterial ribosomal protein bL31 family. Type B subfamily. In terms of assembly, part of the 50S ribosomal subunit.

In Chloroherpeton thalassium (strain ATCC 35110 / GB-78), this protein is Large ribosomal subunit protein bL31B.